Consider the following 859-residue polypeptide: Protein argonaute-2 (859 aa).

The interval 1 to 27 (MYSGAGPALAPPAPPPPIQGYAFKPPP) is disordered. 3'-nitrotyrosine is present on tyrosine 2. The span at 9-27 (LAPPAPPPPIQGYAFKPPP) shows a compositional bias: pro residues. The region spanning 229–348 (PVIEFVCEVL…LPLEVCNIVA (120 aa)) is the PAZ domain. An interaction with guide RNA region spans residues 311–316 (YFKDRH). Position 387 is a phosphoserine (serine 387). A Piwi domain is found at 517 to 818 (LVVVILPGKT…VAFRARYHLV (302 aa)). Residues 524-566 (GKTPVYAEVKRVGDTVLGMATQCVQMKNVQRTTPQTLSNLCLK) are interaction with guide RNA. Residues 587-590 (FQQP) are interaction with GW182 family members. A divalent metal cation is bound at residue aspartate 597. Positions 650-660 (LIQFYKSTRFK) are interaction with GW182 family members. Aspartate 669 contacts a divalent metal cation. Proline 700 carries the 4-hydroxyproline modification. 3 interaction with guide RNA regions span residues 709–710 (KR), 753–761 (HAGIQGTSR), and 790–812 (YVRC…VAFR). Position 807 (histidine 807) interacts with a divalent metal cation. Phosphoserine occurs at positions 824, 828, 831, and 834.

It belongs to the argonaute family. Ago subfamily. As to quaternary structure, interacts with DICER1 through its Piwi domain and with TARBP2 during assembly of the RNA-induced silencing complex (RISC). Together, DICER1, AGO2 and TARBP2 constitute the trimeric RISC loading complex (RLC), or micro-RNA (miRNA) loading complex (miRLC). Within the RLC/miRLC, DICER1 and TARBP2 are required to process precursor miRNAs (pre-miRNAs) to mature miRNAs and then load them onto AGO2. AGO2 bound to the mature miRNA constitutes the minimal RISC and may subsequently dissociate from DICER1 and TARBP2. Note however that the term RISC has also been used to describe the trimeric RLC/miRLC. The formation of RISC complexes containing siRNAs rather than miRNAs appears to occur independently of DICER1. Interacts with AGO1. Also interacts with DDB1, DDX5, DDX6, DDX20, DHX30, DHX36, DDX47, DHX9, ELAVL, FXR1, GEMIN4, HNRNPF, IGF2BP1, ILF3, IMP8, MATR3, PABPC1, PRMT5, P4HA1, P4HB, RBM4, SART3, TNRC6A, TNRC6B, UPF1 and YBX1. Interacts with the P-body components DCP1A and XRN1. Associates with polysomes and messenger ribonucleoproteins (mNRPs). Interacts with RBM4; the interaction is modulated under stress-induced conditions, occurs under both cell proliferation and differentiation conditions and in an RNA- and phosphorylation-independent manner. Interacts with LIMD1, WTIP and AJUBA. Interacts with TRIM71; the interaction increases in presence of RNA. Interacts with APOBEC3G in an RNA-dependent manner. Interacts with APOBEC3A, APOBEC3C, APOBEC3F and APOBEC3H. Interacts with DICER1, TARBP2, EIF6, MOV10 and RPL7A (60S ribosome subunit); they form a large RNA-induced silencing complex (RISC). Interacts with FMR1. Interacts with ZFP36. Found in a complex, composed of AGO2, CHD7 and ARB2A. Interacts with RC3H1; the interaction is RNA independent. Interacts with SND1. Interacts with SYT11. Interacts with CLNK. Interacts with GARRE1. Interacts with GRB2; this interaction is important for the formation of a ternary complex containing GRB2, AGO2 and DICER1. (Microbial infection) Interacts with Epstein-Barr virus (EBV) tegument protein BGLF2; this interaction participates in the regulation of cellular miRNA by the virus, leading to enhanced SUMOylation. In terms of assembly, (Microbial infection) Interacts with rotavirus A non-structural protein 5; this interaction probably plays a role in the sequestration of AGO2 in viral factories. As to quaternary structure, (Microbial infection) Interacts with human herpesvirus 8 protein MTA/ORF57; this interaction inhibits P-body formation. Requires Mg(2+) as cofactor. It depends on Mn(2+) as a cofactor. Hydroxylated. 4-hydroxylation appears to enhance protein stability but is not required for miRNA-binding or endonuclease activity. Post-translationally, ubiquitinated on surface-exposed lysines by a SCF-like E3 ubiquitin-protein ligase complex containing ZSWIM8 during target-directed microRNA degradation (TDMD), a process that mediates degradation of microRNAs (miRNAs). Ubiquitination by the SCF-like E3 ubiquitin-protein ligase complex containing ZSWIM8 leads to its subsequent degradation, thereby exposing miRNAs for degradation. ZSWIM8 recognizes and binds AGO2 when it is engaged with a TDMD target. In terms of processing, phosphorylated. A phosphorylation cycle of C-terminal serine cluster (Ser-824-Ser-834) regulates the release of target mRNAs. Target-binding leads to phosphorylation of these residues by CSNK1A1, which reduces the affinity of AGO2 for mRNA and enables target release. The ANKRD52-PPP6C phosphatase complex dephosphorylates the residues, which primes AGO2 for binding a new target. Phosphorylation at Ser-387 by AKT3; leads to up-regulate translational repression of microRNA target and down-regulate endonucleolytic cleavage.

The protein localises to the cytoplasm. The protein resides in the P-body. It is found in the nucleus. It catalyses the reaction Endonucleolytic cleavage to 5'-phosphomonoester.. With respect to regulation, inhibited by EDTA. Functionally, required for RNA-mediated gene silencing (RNAi) by the RNA-induced silencing complex (RISC). The 'minimal RISC' appears to include AGO2 bound to a short guide RNA such as a microRNA (miRNA) or short interfering RNA (siRNA). These guide RNAs direct RISC to complementary mRNAs that are targets for RISC-mediated gene silencing. The precise mechanism of gene silencing depends on the degree of complementarity between the miRNA or siRNA and its target. Binding of RISC to a perfectly complementary mRNA generally results in silencing due to endonucleolytic cleavage of the mRNA specifically by AGO2. Binding of RISC to a partially complementary mRNA results in silencing through inhibition of translation, and this is independent of endonuclease activity. May inhibit translation initiation by binding to the 7-methylguanosine cap, thereby preventing the recruitment of the translation initiation factor eIF4-E. May also inhibit translation initiation via interaction with EIF6, which itself binds to the 60S ribosomal subunit and prevents its association with the 40S ribosomal subunit. The inhibition of translational initiation leads to the accumulation of the affected mRNA in cytoplasmic processing bodies (P-bodies), where mRNA degradation may subsequently occur. In some cases RISC-mediated translational repression is also observed for miRNAs that perfectly match the 3' untranslated region (3'-UTR). Can also up-regulate the translation of specific mRNAs under certain growth conditions. Binds to the AU element of the 3'-UTR of the TNF (TNF-alpha) mRNA and up-regulates translation under conditions of serum starvation. Also required for transcriptional gene silencing (TGS), in which short RNAs known as antigene RNAs or agRNAs direct the transcriptional repression of complementary promoter regions. In terms of biological role, (Microbial infection) Upon Sars-CoV-2 infection, associates with viral miRNA-like small RNA, CoV2-miR-O7a, and may repress mRNAs, such as BATF2, to evade the IFN response. This chain is Protein argonaute-2, found in Homo sapiens (Human).